The chain runs to 313 residues: Formimidoylglutamase (313 aa).

Positions 130, 155, 157, 159, 241, and 243 each coordinate Mn(2+).

The protein belongs to the arginase family. Requires Mn(2+) as cofactor.

It carries out the reaction N-formimidoyl-L-glutamate + H2O = formamide + L-glutamate. Its pathway is amino-acid degradation; L-histidine degradation into L-glutamate; L-glutamate from N-formimidoyl-L-glutamate (hydrolase route): step 1/1. Its function is as follows. Catalyzes the conversion of N-formimidoyl-L-glutamate to L-glutamate and formamide. The chain is Formimidoylglutamase from Salmonella newport (strain SL254).